The sequence spans 225 residues: Endoglucanase (225 aa).

An N-terminal signal peptide occupies residues 1-15; that stretch reads MKVFVVLAAIVAIAN. Residue aspartate 29 is the Nucleophile of the active site. Disulfide bonds link cysteine 30-cysteine 152, cysteine 31-cysteine 66, cysteine 35-cysteine 103, cysteine 50-cysteine 74, cysteine 104-cysteine 219, cysteine 106-cysteine 209, and cysteine 176-cysteine 187. N-linked (GlcNAc...) asparagine glycosylation occurs at asparagine 55. The Proton donor role is filled by aspartate 138.

It belongs to the glycosyl hydrolase 45 (cellulase K) family. In terms of processing, N- and O-glycosylated. Contains hybrid- and complex-type N-glycans.

Its subcellular location is the secreted. It carries out the reaction Endohydrolysis of (1-&gt;4)-beta-D-glucosidic linkages in cellulose, lichenin and cereal beta-D-glucans.. Its activity is regulated as follows. Activity is not affected by metal ions except Mn(2+), which reduces the activity by 40-50%. However, no significant change in activity in response to 1 mM EDTA. Functionally, hydrolyzes carboxymethylcellulose (CMC). Also hydrolyzes lichenan and barley beta-1,4-D-glucan. CMC is hydrolyzed majorily to cellobiose (G2), cellotriose (G3) and cellotetraose (G4). Cellohexaose (G6) is hydrolyzed to G4 and G2 with traces of G3. Cellopentaose (G5) is completely hydrolyzed to G2 and G3, and G4 is partially hydrolyzed to G2. Does not hydrolyze G2 or G3. Does not hydrolyze crystalline cellulose, soluble starch, xylan, mannan or laminarin. The polypeptide is Endoglucanase (Cryptopygus antarcticus (Antarctic springtail)).